A 556-amino-acid polypeptide reads, in one-letter code: Membrane protein insertase YidC (556 aa).

Transmembrane regions (helical) follow at residues 6–26 (IVLY…WQID), 332–352 (LDLT…FSLM), 358–378 (VVGN…LAFY), 428–448 (LGGC…YWVL), and 501–521 (VMMF…SGLV).

It belongs to the OXA1/ALB3/YidC family. Type 1 subfamily. As to quaternary structure, interacts with the Sec translocase complex via SecD. Specifically interacts with transmembrane segments of nascent integral membrane proteins during membrane integration.

It is found in the cell inner membrane. Functionally, required for the insertion and/or proper folding and/or complex formation of integral membrane proteins into the membrane. Involved in integration of membrane proteins that insert both dependently and independently of the Sec translocase complex, as well as at least some lipoproteins. Aids folding of multispanning membrane proteins. The polypeptide is Membrane protein insertase YidC (Legionella pneumophila (strain Corby)).